We begin with the raw amino-acid sequence, 92 residues long: YcgL domain-containing protein Shewana3_2381 (92 aa).

The 85-residue stretch at 1 to 85 folds into the YcgL domain; sequence MLCAVYKSSR…PQVNLLAEHR (85 aa).

The chain is YcgL domain-containing protein Shewana3_2381 from Shewanella sp. (strain ANA-3).